Consider the following 133-residue polypeptide: Large ribosomal subunit protein bL17 (133 aa).

This sequence belongs to the bacterial ribosomal protein bL17 family. Part of the 50S ribosomal subunit. Contacts protein L32.

The polypeptide is Large ribosomal subunit protein bL17 (Nitratidesulfovibrio vulgaris (strain ATCC 29579 / DSM 644 / CCUG 34227 / NCIMB 8303 / VKM B-1760 / Hildenborough) (Desulfovibrio vulgaris)).